A 340-amino-acid polypeptide reads, in one-letter code: Ketol-acid reductoisomerase (NADP(+)) (340 aa).

A KARI N-terminal Rossmann domain is found at 1–182 (MRVYYDRDCD…GGGRSGIIET (182 aa)). Residues 24 to 27 (YGSQ), Arg-48, Ser-51, Ser-53, and 83 to 86 (DELQ) contribute to the NADP(+) site. Residue His-108 is part of the active site. Gly-134 serves as a coordination point for NADP(+). The KARI C-terminal knotted domain maps to 183-329 (NFRQECETDL…EKLRGMMPWI (147 aa)). The Mg(2+) site is built by Asp-191, Glu-195, Glu-227, and Glu-231. Ser-252 is a substrate binding site.

Belongs to the ketol-acid reductoisomerase family. Mg(2+) serves as cofactor.

The catalysed reaction is (2R)-2,3-dihydroxy-3-methylbutanoate + NADP(+) = (2S)-2-acetolactate + NADPH + H(+). The enzyme catalyses (2R,3R)-2,3-dihydroxy-3-methylpentanoate + NADP(+) = (S)-2-ethyl-2-hydroxy-3-oxobutanoate + NADPH + H(+). It participates in amino-acid biosynthesis; L-isoleucine biosynthesis; L-isoleucine from 2-oxobutanoate: step 2/4. Its pathway is amino-acid biosynthesis; L-valine biosynthesis; L-valine from pyruvate: step 2/4. Its function is as follows. Involved in the biosynthesis of branched-chain amino acids (BCAA). Catalyzes an alkyl-migration followed by a ketol-acid reduction of (S)-2-acetolactate (S2AL) to yield (R)-2,3-dihydroxy-isovalerate. In the isomerase reaction, S2AL is rearranged via a Mg-dependent methyl migration to produce 3-hydroxy-3-methyl-2-ketobutyrate (HMKB). In the reductase reaction, this 2-ketoacid undergoes a metal-dependent reduction by NADPH to yield (R)-2,3-dihydroxy-isovalerate. The sequence is that of Ketol-acid reductoisomerase (NADP(+)) from Cereibacter sphaeroides (strain ATCC 17023 / DSM 158 / JCM 6121 / CCUG 31486 / LMG 2827 / NBRC 12203 / NCIMB 8253 / ATH 2.4.1.) (Rhodobacter sphaeroides).